The sequence spans 142 residues: Large ribosomal subunit protein uL13 (142 aa).

Belongs to the universal ribosomal protein uL13 family. Part of the 50S ribosomal subunit.

This protein is one of the early assembly proteins of the 50S ribosomal subunit, although it is not seen to bind rRNA by itself. It is important during the early stages of 50S assembly. This Trichlorobacter lovleyi (strain ATCC BAA-1151 / DSM 17278 / SZ) (Geobacter lovleyi) protein is Large ribosomal subunit protein uL13.